Reading from the N-terminus, the 147-residue chain is Large ribosomal subunit protein bL9 (147 aa).

Belongs to the bacterial ribosomal protein bL9 family.

Binds to the 23S rRNA. In Campylobacter jejuni subsp. jejuni serotype O:23/36 (strain 81-176), this protein is Large ribosomal subunit protein bL9.